Consider the following 667-residue polypeptide: NADPH--cytochrome P450 reductase (667 aa).

At 1–8 (MEILESID) the chain is on the lumenal side. The helical transmembrane segment at 9–29 (FIEVLILDNLGAIIIVAVIVG) threads the bilayer. The Cytoplasmic portion of the chain corresponds to 30-667 (TYLYMNKPPP…HGRYLQDVWF (638 aa)). The region spanning 72–215 (MKIFFGTQTR…DFNRWKKDMW (144 aa)) is the Flavodoxin-like domain. FMN-binding positions include 164–173 (LGNKTYEHYN) and Asp199. An FAD-binding FR-type domain is found at 277–511 (KNPYYAEVLE…FVRESHFKLP (235 aa)). Arg297 is a binding site for NADP(+). Residues 468-470 (TSV) and 484-487 (GVAS) each bind FAD. Residues Thr527, 586 to 587 (SR), and 592 to 596 (KVYVQ) each bind NADP(+). Position 666 (Trp666) interacts with FAD.

Belongs to the NADPH--cytochrome P450 reductase family. It in the N-terminal section; belongs to the flavodoxin family. The protein in the C-terminal section; belongs to the flavoprotein pyridine nucleotide cytochrome reductase family. Requires FAD as cofactor. The cofactor is FMN.

Its subcellular location is the endoplasmic reticulum membrane. The catalysed reaction is 2 oxidized [cytochrome P450] + NADPH = 2 reduced [cytochrome P450] + NADP(+) + H(+). This enzyme is required for electron transfer from NADP to cytochrome P450 in microsomes. It can also provide electron transfer to heme oxygenase and cytochrome B5. The protein is NADPH--cytochrome P450 reductase (redB) of Dictyostelium discoideum (Social amoeba).